Here is a 248-residue protein sequence, read N- to C-terminus: Triosephosphate isomerase (248 aa).

9–11 (NWK) is a binding site for substrate. His-94 serves as the catalytic Electrophile. Glu-166 serves as the catalytic Proton acceptor. Residues Gly-172, Ser-212, and 233-234 (GG) contribute to the substrate site.

It belongs to the triosephosphate isomerase family. Homodimer.

It localises to the cytoplasm. The enzyme catalyses D-glyceraldehyde 3-phosphate = dihydroxyacetone phosphate. The protein operates within carbohydrate biosynthesis; gluconeogenesis. It participates in carbohydrate degradation; glycolysis; D-glyceraldehyde 3-phosphate from glycerone phosphate: step 1/1. In terms of biological role, involved in the gluconeogenesis. Catalyzes stereospecifically the conversion of dihydroxyacetone phosphate (DHAP) to D-glyceraldehyde-3-phosphate (G3P). The protein is Triosephosphate isomerase of Clostridium perfringens (strain ATCC 13124 / DSM 756 / JCM 1290 / NCIMB 6125 / NCTC 8237 / Type A).